We begin with the raw amino-acid sequence, 78 residues long: Large ribosomal subunit protein eL20 (78 aa).

This sequence belongs to the eukaryotic ribosomal protein eL20 family. In terms of assembly, part of the 50S ribosomal subunit. Binds 23S rRNA.

The polypeptide is Large ribosomal subunit protein eL20 (Pyrobaculum aerophilum (strain ATCC 51768 / DSM 7523 / JCM 9630 / CIP 104966 / NBRC 100827 / IM2)).